The sequence spans 312 residues: Homeobox-leucine zipper protein ATHB-5 (312 aa).

Positions methionine 1–threonine 33 are disordered. Residues aspartate 23 to threonine 33 are compositionally biased toward polar residues. A DNA-binding region (homeobox) is located at residues alanine 69–glutamine 128. A leucine-zipper region spans residues leucine 129 to leucine 164.

Belongs to the HD-ZIP homeobox family. Class I subfamily. Interacts with DNA as homodimer. As to expression, widely expressed.

It localises to the nucleus. Functionally, probable transcription factor that acts as a positive regulator of ABA-responsiveness, mediating the inhibitory effect of ABA on growth during seedling establishment. Binds to the DNA sequence 5'-CAATNATTG-3'. This Arabidopsis thaliana (Mouse-ear cress) protein is Homeobox-leucine zipper protein ATHB-5 (ATHB-5).